A 284-amino-acid polypeptide reads, in one-letter code: Phosphatidylserine decarboxylase proenzyme (284 aa).

Catalysis depends on charge relay system; for autoendoproteolytic cleavage activity residues D88, H145, and S251. The active-site Schiff-base intermediate with substrate; via pyruvic acid; for decarboxylase activity is the S251. S251 carries the post-translational modification Pyruvic acid (Ser); by autocatalysis.

The protein belongs to the phosphatidylserine decarboxylase family. PSD-B subfamily. Prokaryotic type I sub-subfamily. As to quaternary structure, heterodimer of a large membrane-associated beta subunit and a small pyruvoyl-containing alpha subunit. The cofactor is pyruvate. Is synthesized initially as an inactive proenzyme. Formation of the active enzyme involves a self-maturation process in which the active site pyruvoyl group is generated from an internal serine residue via an autocatalytic post-translational modification. Two non-identical subunits are generated from the proenzyme in this reaction, and the pyruvate is formed at the N-terminus of the alpha chain, which is derived from the carboxyl end of the proenzyme. The autoendoproteolytic cleavage occurs by a canonical serine protease mechanism, in which the side chain hydroxyl group of the serine supplies its oxygen atom to form the C-terminus of the beta chain, while the remainder of the serine residue undergoes an oxidative deamination to produce ammonia and the pyruvoyl prosthetic group on the alpha chain. During this reaction, the Ser that is part of the protease active site of the proenzyme becomes the pyruvoyl prosthetic group, which constitutes an essential element of the active site of the mature decarboxylase.

The protein localises to the cell membrane. The catalysed reaction is a 1,2-diacyl-sn-glycero-3-phospho-L-serine + H(+) = a 1,2-diacyl-sn-glycero-3-phosphoethanolamine + CO2. Its pathway is phospholipid metabolism; phosphatidylethanolamine biosynthesis; phosphatidylethanolamine from CDP-diacylglycerol: step 2/2. Catalyzes the formation of phosphatidylethanolamine (PtdEtn) from phosphatidylserine (PtdSer). This is Phosphatidylserine decarboxylase proenzyme from Polaromonas sp. (strain JS666 / ATCC BAA-500).